The primary structure comprises 698 residues: Elongation factor G (698 aa).

The region spanning 10–285 is the tr-type G domain; it reads AGTRNIGIMA…AVVDFLPNPL (276 aa). GTP-binding positions include 19–26, 83–87, and 137–140; these read AHIDAGKT, DTPGH, and NKMD.

This sequence belongs to the TRAFAC class translation factor GTPase superfamily. Classic translation factor GTPase family. EF-G/EF-2 subfamily.

The protein localises to the cytoplasm. Functionally, catalyzes the GTP-dependent ribosomal translocation step during translation elongation. During this step, the ribosome changes from the pre-translocational (PRE) to the post-translocational (POST) state as the newly formed A-site-bound peptidyl-tRNA and P-site-bound deacylated tRNA move to the P and E sites, respectively. Catalyzes the coordinated movement of the two tRNA molecules, the mRNA and conformational changes in the ribosome. The protein is Elongation factor G of Frankia casuarinae (strain DSM 45818 / CECT 9043 / HFP020203 / CcI3).